The sequence spans 79 residues: uncharacterized protein (79 aa).

The protein localises to the mitochondrion. This is an uncharacterized protein from Marchantia polymorpha (Common liverwort).